The chain runs to 392 residues: Methylthioribose-1-phosphate isomerase (392 aa).

Asp-253 (proton donor) is an active-site residue.

Belongs to the eIF-2B alpha/beta/delta subunits family. MtnA subfamily.

It localises to the cytoplasm. It is found in the nucleus. It catalyses the reaction 5-(methylsulfanyl)-alpha-D-ribose 1-phosphate = 5-(methylsulfanyl)-D-ribulose 1-phosphate. It functions in the pathway amino-acid biosynthesis; L-methionine biosynthesis via salvage pathway; L-methionine from S-methyl-5-thio-alpha-D-ribose 1-phosphate: step 1/6. Functionally, catalyzes the interconversion of methylthioribose-1-phosphate (MTR-1-P) into methylthioribulose-1-phosphate (MTRu-1-P). The protein is Methylthioribose-1-phosphate isomerase (mri1) of Pyrenophora tritici-repentis (strain Pt-1C-BFP) (Wheat tan spot fungus).